Consider the following 101-residue polypeptide: NADH-quinone oxidoreductase subunit K (101 aa).

Helical transmembrane passes span 4-24 (LSHY…GIFL), 30-50 (IVLL…FIAF), and 61-81 (VFVF…LAIL).

The protein belongs to the complex I subunit 4L family. As to quaternary structure, NDH-1 is composed of 14 different subunits. Subunits NuoA, H, J, K, L, M, N constitute the membrane sector of the complex.

Its subcellular location is the cell inner membrane. The catalysed reaction is a quinone + NADH + 5 H(+)(in) = a quinol + NAD(+) + 4 H(+)(out). In terms of biological role, NDH-1 shuttles electrons from NADH, via FMN and iron-sulfur (Fe-S) centers, to quinones in the respiratory chain. The immediate electron acceptor for the enzyme in this species is believed to be ubiquinone. Couples the redox reaction to proton translocation (for every two electrons transferred, four hydrogen ions are translocated across the cytoplasmic membrane), and thus conserves the redox energy in a proton gradient. This chain is NADH-quinone oxidoreductase subunit K, found in Azoarcus sp. (strain BH72).